A 457-amino-acid polypeptide reads, in one-letter code: UDP-N-acetylmuramate--L-alanine ligase (457 aa).

ATP is bound at residue 112 to 118 (GAHGKTS).

It belongs to the MurCDEF family.

The protein resides in the cytoplasm. The catalysed reaction is UDP-N-acetyl-alpha-D-muramate + L-alanine + ATP = UDP-N-acetyl-alpha-D-muramoyl-L-alanine + ADP + phosphate + H(+). It functions in the pathway cell wall biogenesis; peptidoglycan biosynthesis. Functionally, cell wall formation. The polypeptide is UDP-N-acetylmuramate--L-alanine ligase (Desulfosudis oleivorans (strain DSM 6200 / JCM 39069 / Hxd3) (Desulfococcus oleovorans)).